A 251-amino-acid polypeptide reads, in one-letter code: Homeobox protein notochord (251 aa).

A compositionally biased stretch (pro residues) spans 1–14; the sequence is MPSPRPRGSPPPAP. Residues 1 to 47 form a disordered region; that stretch reads MPSPRPRGSPPPAPSGSRVRPPRSGRSPAPRSPTGPNTPRAPGRFES. A compositionally biased stretch (low complexity) spans 15–35; that stretch reads SGSRVRPPRSGRSPAPRSPTG. Positions 156–215 form a DNA-binding region, homeobox; sequence QKRVRTMFNLEQLEELEKVFAKQHNLVGKKRAQLAARLKLTENQVRVWFQNRRVKYQKQQ. Low complexity predominate over residues 224-242; sequence AEAASLDEPSSSSIASIQS. The interval 224–251 is disordered; sequence AEAASLDEPSSSSIASIQSDDAESGVDG.

Its subcellular location is the nucleus. In terms of biological role, transcription regulator acting downstream of both FOXA2 and Brachyury (T) during notochord development. Required for node morphogenesis. Is essential for cilia formation in the posterior notochord (PNC) and for left-right patterning; acts upstream of FOXJ1 and RFX3 in this process and is required for the expression of various components important for axonemal assembly and function. Plays a role in regulating axial versus paraxial cell fate. Activates the transcription of ciliary proteins C11orf97 homolog, FAM183B and SPACA9 in the embryonic ventral node. This Homo sapiens (Human) protein is Homeobox protein notochord (NOTO).